A 229-amino-acid chain; its full sequence is Small ribosomal subunit protein uS3 (229 aa).

A KH type-2 domain is found at 38–106; that stretch reads IREYIENKLF…KVHINVMEVK (69 aa). Positions 208–217 are enriched in acidic residues; it reads PEVDENEETK. A disordered region spans residues 208 to 229; the sequence is PEVDENEETKEENKEKSEEKSE. Over residues 218–229 the composition is skewed to basic and acidic residues; the sequence is EENKEKSEEKSE.

This sequence belongs to the universal ribosomal protein uS3 family. As to quaternary structure, part of the 30S ribosomal subunit. Forms a tight complex with proteins S10 and S14.

In terms of biological role, binds the lower part of the 30S subunit head. Binds mRNA in the 70S ribosome, positioning it for translation. The sequence is that of Small ribosomal subunit protein uS3 from Natranaerobius thermophilus (strain ATCC BAA-1301 / DSM 18059 / JW/NM-WN-LF).